The chain runs to 468 residues: Tubulin gamma chain (468 aa).

142-148 is a binding site for GTP; it reads AGGTGSG.

The protein belongs to the tubulin family.

Its subcellular location is the cytoplasm. It localises to the cytoskeleton. It is found in the microtubule organizing center. Functionally, tubulin is the major constituent of microtubules. The gamma chain is found at microtubule organizing centers (MTOC) such as the spindle poles, suggesting that it is involved in the minus-end nucleation of microtubule assembly. The polypeptide is Tubulin gamma chain (TUBG) (Chlamydomonas reinhardtii (Chlamydomonas smithii)).